An 89-amino-acid polypeptide reads, in one-letter code: MKKAAAVLLSLGLVFGFSYGAGHVAEAKTKVKVYKNCKELNKVYKGGVARTSKVKNKGGKTKYKPYVSKALYDANKNKDRDKDLIACER.

The signal sequence occupies residues 1–27; that stretch reads MKKAAAVLLSLGLVFGFSYGAGHVAEA.

This is an uncharacterized protein from Bacillus subtilis (strain 168).